A 682-amino-acid chain; its full sequence is MPSLRTRREEAEMELSAPGPSPWTPAAQAHVSDAPAVTHPGSAACGTPCCSDTELEAICPHYQQPDCDTRTEDKEFLHKEDIHEDLESQAEISENYAGDVLQVPELGDLCDDVSERDWGVPEGRRLPQSLSQEGDFTPAAMGLLRGPLGEKDLDCNGFDSRFSLSPNLMACQEIPTEERPHPYDMGGQSFQHSVDLTGHEGVPTAESPLICNECGKTFQGNPDLIQCQIVHTGEASFMCDDCGKTFSQNSVLKNHHRSHMSEKAYQCSECGKAFRGHSDFSRHQSHHSSERPYMCNECGKAFSQNSSLKKHQKSHMSEKPYECNECGKAFRRSSNLIQHQRIHSGEKPYVCSECGKAFRRSSNLIKHHRTHTGEKPFECGECGKAFSQSAHLRKHQRVHTGEKPYECNDCGKPFSRVSNLIKHHRVHTGEKPYKCSDCGKAFSQSSSLIQHRRIHTGEKPHVCNICGKAFSYSSVLRKHQIIHTGEKPYRCSVCGKAFSHSSALIQHQGVHTGDKPYACHECGKTFGRSSNLILHQRVHTGEKPYECTECGKTFSQSSTLIQHQRIHNGLKPHECNQCGKAFNRSSNLIHHQKVHTGEKPYTCVECGKGFSQSSHLIQHQIIHTGERPYKCSECGKAFSQRSVLIQHQRIHTGVKPYDCAACGKAFSQRSKLIKHQLIHTRE.

Basic and acidic residues-rich tracts occupy residues 1–10 and 113–125; these read MPSLRTRREE and VSER…EGRR. 2 disordered regions span residues 1-33 and 112-134; these read MPSL…HVSD and DVSE…SQEG. Residues 62-210 form a necessary for transcription activation region; sequence YQQPDCDTRT…GVPTAESPLI (149 aa). The C2H2-type 1; degenerate zinc-finger motif lies at 209–231; the sequence is LICNECGKTFQGNPDLIQCQIVH. Residues 237 to 259 form a C2H2-type 2; degenerate zinc finger; the sequence is FMCDDCGKTFSQNSVLKNHHRSH. Residue K253 forms a Glycyl lysine isopeptide (Lys-Gly) (interchain with G-Cter in SUMO2) linkage. 8 C2H2-type zinc fingers span residues 265–287, 293–315, 321–343, 349–371, 377–399, 405–427, 433–455, and 461–483; these read YQCS…QSHH, YMCN…QKSH, YECN…QRIH, YVCS…HRTH, FECG…QRVH, YECN…HRVH, YKCS…RRIH, and HVCN…QIIH. Required for nuclear localization stretches follow at residues 268–393 and 341–373; these read SECG…AHLR and RIHS…THTG. Residues 473 to 503 form a required for nuclear localization region; that stretch reads SSVLRKHQIIHTGEKPYRCSVCGKAFSHSSA. Residue K487 is modified to N6-acetyllysine. C2H2-type zinc fingers lie at residues 489 to 511, 517 to 539, 545 to 567, 573 to 595, 601 to 623, 629 to 651, and 657 to 679; these read YRCS…QGVH, YACH…QRVH, YECT…QRIH, HECN…QKVH, YTCV…QIIH, YKCS…QRIH, and YDCA…QLIH.

It belongs to the krueppel C2H2-type zinc-finger protein family. Interacts with INCA1; the interaction inhibits INCA1 activity and induces the cell cycle process.

Its subcellular location is the nucleus. Acts as a transcriptional activator. Promotes cell proliferation by facilitating the cell cycle phase transition from the S to G2/M phase. Involved in both the hemin- and phorbol myristate acetate (PMA)-induced erythroid and megakaryocytic differentiation, respectively. Also plays a role as an inhibitor of cell apoptosis. The sequence is that of Zinc finger protein 16 (ZNF16) from Gorilla gorilla gorilla (Western lowland gorilla).